The chain runs to 378 residues: Probable dihydroorotase-like protein (378 aa).

This sequence belongs to the metallo-dependent hydrolases superfamily. DHOase family. PyrC' subfamily.

Non-functional DHOase. The sequence is that of Probable dihydroorotase-like protein (pyrC') from Helicobacter pylori (strain ATCC 700392 / 26695) (Campylobacter pylori).